The following is a 632-amino-acid chain: Epithelial sodium channel subunit alpha (632 aa).

At 1–49 (MTKEEKNEKEALIEFFSSYRELFEFFCSNTTIHGAIRLVCSRRNRMKTA) the chain is on the cytoplasmic side. The helical transmembrane segment at 50 to 70 (FWLVLFLVTFGLMYWQFGLLF) threads the bilayer. Topologically, residues 71-520 (GQYFSYPVSI…SQWSLWFGSS (450 aa)) are extracellular. Intrachain disulfides connect Cys97–Cys264, Cys189–Cys196, Cys241–Cys248, Cys355–Cys440, Cys377–Cys417, Cys377–Cys436, Cys381–Cys432, Cys390–Cys417, Cys390–Cys440, and Cys392–Cys406. A helical membrane pass occupies residues 521–541 (VLSVVEMLELVIDFVIIGVMI). Residues 542–632 (LLHRYYYKKA…YYEENGGRRN (91 aa)) lie on the Cytoplasmic side of the membrane. The span at 612–622 (SRSSSMRSNRS) shows a compositional bias: low complexity. Residues 612–632 (SRSSSMRSNRSYYEENGGRRN) form a disordered region. Basic and acidic residues predominate over residues 623-632 (YYEENGGRRN).

Belongs to the amiloride-sensitive sodium channel (TC 1.A.6) family. SCNN1A subfamily. Heterotrimer; containing an alpha/SCNN1A, a beta/SCNN1B and a gamma/SCNN1G subunit. Interacts with shroom1.

It is found in the apical cell membrane. The protein resides in the cell projection. It localises to the cilium. The protein localises to the cytoplasmic granule. Its subcellular location is the cytoplasm. It is found in the cytoplasmic vesicle. The protein resides in the secretory vesicle. It localises to the acrosome. The protein localises to the flagellum. The enzyme catalyses Na(+)(in) = Na(+)(out). Its activity is regulated as follows. Originally identified and characterized by its inhibition by the diuretic drug amiloride. In terms of biological role, this is one of the three pore-forming subunits of the heterotrimeric epithelial sodium channel (ENaC), a critical regulator of sodium balance and fluid homeostasis. ENaC operates in epithelial tissues, where it mediates the electrodiffusion of sodium ions from extracellular fluid through the apical membrane of cells, with water following osmotically. It plays a key role in maintaining sodium homeostasis through electrogenic sodium reabsorption in the kidneys. In Xenopus laevis (African clawed frog), this protein is Epithelial sodium channel subunit alpha.